The following is a 353-amino-acid chain: Lactosylceramide 4-alpha-galactosyltransferase (353 aa).

Over 1-22 (MSKPPDLLLRLLRGAPRQRVCT) the chain is Cytoplasmic. A helical; Signal-anchor for type II membrane protein membrane pass occupies residues 23-43 (LFIIGFKFTFFVSIMIYWHVV). Residues 44-353 (GEPKEKGQLY…TTHEAMKMYL (310 aa)) lie on the Lumenal side of the membrane. The N-linked (GlcNAc...) asparagine glycan is linked to asparagine 121. Positions 192-194 (DTD) match the DXD motif motif. N-linked (GlcNAc...) asparagine glycosylation occurs at asparagine 203.

Belongs to the glycosyltransferase 32 family. As to expression, ubiquitous. Highly expressed in kidney, heart, spleen, liver, testis and placenta.

The protein localises to the golgi apparatus membrane. The catalysed reaction is a beta-D-Gal-(1-&gt;4)-beta-D-Glc-(1&lt;-&gt;1)-Cer(d18:1(4E)) + UDP-alpha-D-galactose = a globoside Gb3Cer (d18:1(4E)) + UDP + H(+). The enzyme catalyses a beta-D-Gal-(1&lt;-&gt;1')-ceramide + UDP-alpha-D-galactose = alpha-D-Gal-(1-&gt;4)-beta-D-Gal-(1&lt;-&gt;1')-Cer + UDP + H(+). It participates in glycolipid biosynthesis. Catalyzes the transfer of galactose from UDP-alpha-D-galactose to lactosylceramide/beta-D-galactosyl-(1-&gt;4)-beta-D-glucosyl-(1&lt;-&gt;1)-ceramide(d18:1(4E)) to produce globotriaosylceramide/globoside Gb3Cer (d18:1(4E)). Also able to transfer galactose to galactosylceramide/beta-D-Gal-(1&lt;-&gt;1')-Cer. Globoside Gb3Cer is a glycosphingolipid of the globo serie, one of the major types of neutral root structures of glycosphingolipids, that constitute a significant portion of mammalian cell membranes. Globotriaosylceramide/globoside Gb3Cer in blood and tissue cell membranes is the antigen Pk of blood histogroup P. In terms of biological role, (Microbial infection) Globotriaosylceramide is one of the cellular ligands for bacterial verotoxins. This is Lactosylceramide 4-alpha-galactosyltransferase (A4GALT) from Homo sapiens (Human).